Consider the following 339-residue polypeptide: Phosphate acyltransferase (339 aa).

The protein belongs to the PlsX family. In terms of assembly, homodimer. Probably interacts with PlsY.

The protein localises to the cytoplasm. The enzyme catalyses a fatty acyl-[ACP] + phosphate = an acyl phosphate + holo-[ACP]. The protein operates within lipid metabolism; phospholipid metabolism. Catalyzes the reversible formation of acyl-phosphate (acyl-PO(4)) from acyl-[acyl-carrier-protein] (acyl-ACP). This enzyme utilizes acyl-ACP as fatty acyl donor, but not acyl-CoA. The sequence is that of Phosphate acyltransferase from Moorella thermoacetica (strain ATCC 39073 / JCM 9320).